The primary structure comprises 117 residues: Photosystem II reaction center Psb28 protein (117 aa).

Belongs to the Psb28 family. Part of the photosystem II complex.

Its subcellular location is the cellular thylakoid membrane. This Prochlorococcus marinus (strain MIT 9211) protein is Photosystem II reaction center Psb28 protein.